The chain runs to 250 residues: 26 kDa periplasmic immunogenic protein (250 aa).

Positions 1 to 28 (MNTRASNFLAASFSTIMLVGAFSLPAFA) are cleaved as a signal peptide.

The protein localises to the periplasm. The chain is 26 kDa periplasmic immunogenic protein (bp26) from Brucella abortus (strain S19).